The sequence spans 222 residues: Phosphoribosylformylglycinamidine synthase subunit PurQ (222 aa).

Residues 2–222 (RTAVIQFPGS…FESLKGALVQ (221 aa)) form the Glutamine amidotransferase type-1 domain. Cys-87 serves as the catalytic Nucleophile. Catalysis depends on residues His-195 and Glu-197.

In terms of assembly, part of the FGAM synthase complex composed of 1 PurL, 1 PurQ and 2 PurS subunits.

Its subcellular location is the cytoplasm. The catalysed reaction is N(2)-formyl-N(1)-(5-phospho-beta-D-ribosyl)glycinamide + L-glutamine + ATP + H2O = 2-formamido-N(1)-(5-O-phospho-beta-D-ribosyl)acetamidine + L-glutamate + ADP + phosphate + H(+). It catalyses the reaction L-glutamine + H2O = L-glutamate + NH4(+). Its pathway is purine metabolism; IMP biosynthesis via de novo pathway; 5-amino-1-(5-phospho-D-ribosyl)imidazole from N(2)-formyl-N(1)-(5-phospho-D-ribosyl)glycinamide: step 1/2. Functionally, part of the phosphoribosylformylglycinamidine synthase complex involved in the purines biosynthetic pathway. Catalyzes the ATP-dependent conversion of formylglycinamide ribonucleotide (FGAR) and glutamine to yield formylglycinamidine ribonucleotide (FGAM) and glutamate. The FGAM synthase complex is composed of three subunits. PurQ produces an ammonia molecule by converting glutamine to glutamate. PurL transfers the ammonia molecule to FGAR to form FGAM in an ATP-dependent manner. PurS interacts with PurQ and PurL and is thought to assist in the transfer of the ammonia molecule from PurQ to PurL. In Deinococcus geothermalis (strain DSM 11300 / CIP 105573 / AG-3a), this protein is Phosphoribosylformylglycinamidine synthase subunit PurQ.